We begin with the raw amino-acid sequence, 290 residues long: Probable prolyl 4-hydroxylase 8 (290 aa).

At 1–19 the chain is on the cytoplasmic side; the sequence is MAKKPKQLRNKPRKSFSTQ. The helical; Signal-anchor for type II membrane protein transmembrane segment at 20 to 40 threads the bilayer; the sequence is TFTVVVLVLFVILILVGLGIF. Over 41–290 the chain is Lumenal; the sequence is SLPSTNKTSS…TKWFHVHEYN (250 aa). Asn46 carries N-linked (GlcNAc...) asparagine glycosylation. Positions 163–286 constitute a Fe2OG dioxygenase domain; sequence NGEGLQVLHY…KWSSTKWFHV (124 aa). Fe cation is bound by residues His181 and Asp183. Asn222 carries an N-linked (GlcNAc...) asparagine glycan. Fe cation is bound at residue His267. Lys277 serves as a coordination point for 2-oxoglutarate.

It belongs to the P4HA family. The cofactor is Fe(2+). Requires L-ascorbate as cofactor.

The protein localises to the endoplasmic reticulum membrane. The enzyme catalyses L-prolyl-[collagen] + 2-oxoglutarate + O2 = trans-4-hydroxy-L-prolyl-[collagen] + succinate + CO2. Its function is as follows. Catalyzes the post-translational formation of 4-hydroxyproline in -Xaa-Pro-Gly- sequences in proline-rich peptide sequences of plant glycoproteins and other proteins. Hydroxyprolines are important constituent of many plant cell wall glycoproteins such as extensins, hydroxyproline-rich glycoproteins, lectins and arabinogalactan proteins. The chain is Probable prolyl 4-hydroxylase 8 from Arabidopsis thaliana (Mouse-ear cress).